The following is a 335-amino-acid chain: Zinc finger protein CO3 (335 aa).

Residues Cys-15, Cys-18, Cys-38, and His-43 each contribute to the Zn(2+) site. The B box-type; atypical zinc finger occupies 15 to 57; that stretch reads CDSCRSAPCAFYCLADSAALCATCDADVHSVNPLARRHRRVPM. The disordered stretch occupies residues 141 to 179; sequence AGEKEDASSSKDCSSSHGKSSEGSHEFAVPGEPVPERQG. Residues 268–310 form the CCT domain; that stretch reads REARVHRYREKRKTRRFEKTIRYASRKAYAETRPRIKGRFAKR.

This sequence belongs to the CONSTANS family.

It localises to the nucleus. Probable transcription factor involved in the regulation of flowering time under short day (SD) conditions. Functions as a repressor of flowering under SD conditions, independently of HD1, EHD1, MADS50 and MADS51. Controls flowering time under SD conditions by negatively regulating the expression of HD3A and FTL. The chain is Zinc finger protein CO3 from Oryza sativa subsp. japonica (Rice).